We begin with the raw amino-acid sequence, 1889 residues long: Treslin (1889 aa).

Residues S295, S599, S820, S861, S919, S934, S1002, S1027, and S1078 each carry the phosphoserine modification. A compositionally biased stretch (low complexity) spans 812 to 832 (DSMSQESMSPPPSSSTHRSVS). The tract at residues 812 to 836 (DSMSQESMSPPPSSSTHRSVSAITE) is disordered. The tract at residues 979 to 1063 (RLLHRQIKGR…RENFPVQSIQ (85 aa)) is disordered. The span at 1020-1050 (LSFSRTNSGSFYSVSQPKSRSVQRIHSSQQE) shows a compositional bias: polar residues. 6 disordered regions span residues 1098–1421 (EIST…SQFS), 1471–1508 (LPGE…SSSE), 1520–1543 (GKQR…SPQT), 1630–1714 (SCTP…SLEQ), 1730–1751 (VCQL…ETSW), and 1841–1875 (QGRT…TLSR). Positions 1127-1179 (TAQTLLYTPERLQNSPTEMTSAEGTISEATIKTPSSHGYNSPFASKVTSQKTV) are enriched in polar residues. T1134 is subject to Phosphothreonine. At S1141 the chain carries Phosphoserine. A compositionally biased stretch (low complexity) spans 1187–1197 (SPPLTKLPSTP). Polar residues predominate over residues 1203–1219 (QPPQCSSDCTWPHSVNS). The segment covering 1339-1351 (TSPSVTSSVSCPV) has biased composition (low complexity). Positions 1373–1382 (KLRRSCRKKS) are enriched in basic residues. Residue S1406 is modified to Phosphoserine. Residues 1496–1508 (LVPAPSSVSSSSE) show a composition bias toward low complexity. 2 stretches are compositionally biased toward polar residues: residues 1525-1543 (DAAQ…SPQT) and 1652-1662 (WTPSPKQSGKT). Positions 1705 to 1714 (PEGKERSLEQ) are enriched in basic and acidic residues.

Belongs to the treslin family. As to quaternary structure, interacts with TOPBP1 (via BRCT domains); interaction takes place in a CDK2-dependent manner. Component of the replisome complex composed of at least DONSON, MCM2, MCM7, PCNA and TICRR.

Its subcellular location is the nucleus. Regulator of DNA replication and S/M and G2/M checkpoints. Regulates the triggering of DNA replication initiation via its interaction with TOPBP1 by participating in CDK2-mediated loading of CDC45L onto replication origins. Required for the transition from pre-replication complex (pre-RC) to pre-initiation complex (pre-IC). Required to prevent mitotic entry after treatment with ionizing radiation. This chain is Treslin (Ticrr), found in Mus musculus (Mouse).